Consider the following 357-residue polypeptide: 3'-hydroxy-N-methyl-(S)-coclaurine 4'-O-methyltransferase 2 (357 aa).

D226 contributes to the S-adenosyl-L-methionine binding site. H264 functions as the Proton acceptor in the catalytic mechanism.

Belongs to the class I-like SAM-binding methyltransferase superfamily. Cation-independent O-methyltransferase family. COMT subfamily. Homodimer. Expressed in roots, stems, leaves and flowers.

The catalysed reaction is (S)-3'-hydroxy-N-methylcoclaurine + S-adenosyl-L-methionine = (S)-reticuline + S-adenosyl-L-homocysteine + H(+). Its pathway is alkaloid biosynthesis; (S)-reticuline biosynthesis; (S)-reticuline from (S)-norcoclaurine: step 4/4. Involved in the biosynthesis of benzylisoquinoline alkaloids. Catalyzes the transfer of the methyl group to the 4'-hydroxyl group of 3'-hydroxy-N-methylcoclaurine to form reticuline. Can also use laudanosoline and, with a lower activity, 6-O-methylnorlaudanosoline and norlaudanosoline as substrates. Also involved in the papaverine biosynthesis. This chain is 3'-hydroxy-N-methyl-(S)-coclaurine 4'-O-methyltransferase 2, found in Papaver somniferum (Opium poppy).